We begin with the raw amino-acid sequence, 377 residues long: Anhydro-N-acetylmuramic acid kinase (377 aa).

Residue 19 to 26 (GTSLDGVD) coordinates ATP.

Belongs to the anhydro-N-acetylmuramic acid kinase family.

It carries out the reaction 1,6-anhydro-N-acetyl-beta-muramate + ATP + H2O = N-acetyl-D-muramate 6-phosphate + ADP + H(+). It participates in amino-sugar metabolism; 1,6-anhydro-N-acetylmuramate degradation. Its pathway is cell wall biogenesis; peptidoglycan recycling. Functionally, catalyzes the specific phosphorylation of 1,6-anhydro-N-acetylmuramic acid (anhMurNAc) with the simultaneous cleavage of the 1,6-anhydro ring, generating MurNAc-6-P. Is required for the utilization of anhMurNAc either imported from the medium or derived from its own cell wall murein, and thus plays a role in cell wall recycling. The protein is Anhydro-N-acetylmuramic acid kinase of Roseobacter denitrificans (strain ATCC 33942 / OCh 114) (Erythrobacter sp. (strain OCh 114)).